A 323-amino-acid chain; its full sequence is Ankyrin repeat and SOCS box protein 11 (323 aa).

6 ANK repeats span residues 64-93 (ADRS…NVNL), 97-126 (NRVS…HVNG), 130-159 (HGAT…KAQL), 162-191 (HLAS…NIDH), 195-224 (QLGT…SVDH), and 227-256 (WLDT…NLKR). The region spanning 273–323 (SVEQALLLREGPPALSQLCRLCVRKCLGRACHQAIHKLHLPEPLERFLLYQ) is the SOCS box domain.

It belongs to the ankyrin SOCS box (ASB) family. As to quaternary structure, substrate-recognition component of the ECS(ASB11) complex, composed of ASB11, CUL5, ELOB, ELOC and RNF7/RBX2.

It localises to the endoplasmic reticulum. It functions in the pathway protein modification; protein ubiquitination. Functionally, substrate-recognition component of a cullin-5-RING E3 ubiquitin-protein ligase complex (ECS complex, also named CRL5 complex), which mediates the ubiquitination and subsequent proteasomal degradation of target proteins, such as BIK, DIRAS2 and RPN1. The ECS(ASB11) complex acts as a regulator of the endoplasmic reticulum unfolded protein response by mediating ubiquitination and degradation of BIK. The chain is Ankyrin repeat and SOCS box protein 11 from Homo sapiens (Human).